Reading from the N-terminus, the 172-residue chain is Probable chorismate pyruvate-lyase (172 aa).

Positions 37, 79, 117, and 158 each coordinate substrate.

The protein belongs to the UbiC family.

The protein localises to the cytoplasm. The catalysed reaction is chorismate = 4-hydroxybenzoate + pyruvate. It participates in cofactor biosynthesis; ubiquinone biosynthesis. Removes the pyruvyl group from chorismate, with concomitant aromatization of the ring, to provide 4-hydroxybenzoate (4HB) for the ubiquinone pathway. This Bartonella quintana (strain Toulouse) (Rochalimaea quintana) protein is Probable chorismate pyruvate-lyase.